The chain runs to 176 residues: Inner membrane-spanning protein YciB (176 aa).

A run of 5 helical transmembrane segments spans residues 24 to 44 (TATA…AFRH), 49 to 69 (PMLW…LVLH), 76 to 96 (WKPT…QLAF), 119 to 139 (LNVV…FVAY), and 149 to 169 (FKLF…SLWL).

It belongs to the YciB family.

It localises to the cell inner membrane. In terms of biological role, plays a role in cell envelope biogenesis, maintenance of cell envelope integrity and membrane homeostasis. The protein is Inner membrane-spanning protein YciB of Paraburkholderia xenovorans (strain LB400).